The primary structure comprises 563 residues: (R)-mandelonitrile lyase 2 (563 aa).

An N-terminal signal peptide occupies residues Met1–Ser27. FAD contacts are provided by residues Thr63–Ser64, Glu82–Arg83, Val129, Thr133, and Asn137–Val140. Asn145 and Asn162 each carry an N-linked (GlcNAc...) asparagine glycan. Residue Val244 coordinates FAD. Cys355 serves as a coordination point for substrate. Asn379 and Asn419 each carry an N-linked (GlcNAc...) asparagine glycan. An intrachain disulfide couples Cys426 to Cys477. Residue Tyr484 coordinates substrate. Residues Trp485–His486 and Gly514 each bind FAD. The Proton donor role is filled by His486. His524 functions as the Proton acceptor in the catalytic mechanism. An FAD-binding site is contributed by Pro525 to Gln526.

It belongs to the GMC oxidoreductase family. As to quaternary structure, monomer. Requires FAD as cofactor. Post-translationally, glycosylated. Deglycosylation does not affect the enzymatic activity.

It carries out the reaction (R)-mandelonitrile = benzaldehyde + hydrogen cyanide. Involved in cyanogenesis, the release of HCN from injured tissues. Catalyzes the stereospecific addition of HCN to a variety of aldehydes in vitro. Has no oxidase activity. The redox properties of the FAD cofactor appear to be unimportant for catalysis. The polypeptide is (R)-mandelonitrile lyase 2 (MDL2) (Prunus dulcis (Almond)).